The primary structure comprises 636 residues: ATP-dependent zinc metalloprotease FtsH (636 aa).

At 1–12 (MKKLLENLSLWM) the chain is on the cytoplasmic side. A helical membrane pass occupies residues 13–33 (GIIILVTLLFGQVALNFGFGI). Residues 34-104 (RNEKIQFSEF…VASGDSFLGL (71 aa)) lie on the Periplasmic side of the membrane. The helical transmembrane segment at 105-125 (LFNILISWFPMLLLIGVWIFF) threads the bilayer. Topologically, residues 126–636 (MKQMQAGGNK…ESDLDTGDKE (511 aa)) are cytoplasmic. Position 197-204 (197-204 (GPPGTGKT)) interacts with ATP. Zn(2+) is bound at residue histidine 419. Glutamate 420 is a catalytic residue. Zn(2+) is bound by residues histidine 423 and aspartate 497.

In the central section; belongs to the AAA ATPase family. This sequence in the C-terminal section; belongs to the peptidase M41 family. In terms of assembly, homohexamer. Requires Zn(2+) as cofactor.

The protein resides in the cell inner membrane. Acts as a processive, ATP-dependent zinc metallopeptidase for both cytoplasmic and membrane proteins. Plays a role in the quality control of integral membrane proteins. The protein is ATP-dependent zinc metalloprotease FtsH of Neorickettsia risticii (strain Illinois).